The chain runs to 420 residues: MDVENGEGQVQVHLKTKQEHYAVPDVPYAIDGTVTTVELNTFVNALLRQKDGSSDTDFDFLVFDEYLRGRLCDHLREKAISFEDAIEIEYVERFPAPEPQDCLLHDDWVSAVKASGKWILSGCYDNTLNLWTNKGKHILTISGHTAPIKAVDWISLDEETGRFVSTSQDQTAMLWQWNVGSNSVECVSVCKGHERGVDSVSVSPDGLRFATGSWDTMLKVWSAEVEDAVEGSSKRMKESGVRTPKITLQGHRESVSAVQWMDASTLLTGSWDHTLKVWDLSLEGIKTEISTNKSIFDASYSKLNRLILTASADKNLRLYDPRTNQGSVVRNTYLGHNAWVQTVMWSTTEEFLFVSGAYDNQNKLWDCRSPKAPLYDLLGHGEKVLDIDWSNPKYIVSGGVDNTVRVFKSRKALADDAETK.

Positions 10–92 (VQVHLKTKQE…EDAIEIEYVE (83 aa)) are ubiquitin-like (UBL) domain. WD repeat units lie at residues 104 to 142 (LHDD…LTIS), 143 to 185 (GHTA…NSVE), 192 to 231 (GHER…AVEG), 250 to 288 (GHRE…IKTE), 290 to 329 (STNK…GSVV), 335 to 375 (GHNA…APLY), and 379 to 417 (GHGE…ADDA).

Belongs to the WD repeat WDR12/YTM1 family.

The protein resides in the nucleus. Its subcellular location is the nucleolus. It is found in the nucleoplasm. Functionally, required for maturation of ribosomal RNAs and formation of the large ribosomal subunit. The sequence is that of Ribosome biogenesis protein WDR12 homolog from Drosophila yakuba (Fruit fly).